We begin with the raw amino-acid sequence, 47 residues long: Large ribosomal subunit protein bL36A (47 aa).

Belongs to the bacterial ribosomal protein bL36 family.

This Yersinia enterocolitica serotype O:8 / biotype 1B (strain NCTC 13174 / 8081) protein is Large ribosomal subunit protein bL36A.